We begin with the raw amino-acid sequence, 370 residues long: NADH-quinone oxidoreductase subunit D (370 aa).

The protein belongs to the complex I 49 kDa subunit family. In terms of assembly, NDH-1 is composed of 14 different subunits. Subunits NuoB, C, D, E, F, and G constitute the peripheral sector of the complex.

It is found in the cell membrane. It carries out the reaction a quinone + NADH + 5 H(+)(in) = a quinol + NAD(+) + 4 H(+)(out). Functionally, NDH-1 shuttles electrons from NADH, via FMN and iron-sulfur (Fe-S) centers, to quinones in the respiratory chain. The immediate electron acceptor for the enzyme in this species is believed to be a menaquinone. Couples the redox reaction to proton translocation (for every two electrons transferred, four hydrogen ions are translocated across the cytoplasmic membrane), and thus conserves the redox energy in a proton gradient. The sequence is that of NADH-quinone oxidoreductase subunit D from Clostridium beijerinckii (strain ATCC 51743 / NCIMB 8052) (Clostridium acetobutylicum).